The chain runs to 471 residues: MSPEMGELTQTRLQKIWIPHSSGSSRLQRRRGSSIPQFTNSPTMVIMVGLPARGKTYISTKLTRYLNWIGTPTKVFNLGQYRREAVSYKNYEFFLPDNMEALQIRKQCALAALKDVHNYLSHEEGHVAVFDATNTTRERRSLILQFAKEHGYKVFFIESICNDPGIIAENIRQVKLGSPDYIDCDREKVLEDFLKRIECYEVNYQPLDEELDSHLSYIKIFDVGTRYMVNRVQDHIQSRTVYYLMNIHVTPRSIYLCRHGESELNIRGRIGGDSGLSVRGKQYAYALANFIQSQGISSLKVWTSHMKRTIQTAEALGVPYEQWKALNEIDAGVCEEMTYEEIQEHYPEEFALRDQDKYRYRYPKGESYEDLVQRLEPVIMELERQENVLVICHQAVMRCLLAYFLDKSSDELPYLKCPLHTVLKLTPVAYGCKVESIYLNVEAVNTHREKPENVDITREPEEALDTVPAHY.

An N-acetylserine modification is found at S2. The interval 2–250 is 6-phosphofructo-2-kinase; that stretch reads SPEMGELTQT…VYYLMNIHVT (249 aa). S33 is subject to Phosphoserine; by PKA. 49–57 lines the ATP pocket; the sequence is GLPARGKTY. Beta-D-fructose 6-phosphate is bound by residues R82 and R105. D131 is an active-site residue. 2 residues coordinate beta-D-fructose 6-phosphate: T133 and R139. S141 bears the Phosphoserine mark. Residue C161 is part of the active site. An ATP-binding site is contributed by 170-175; sequence NIRQVK. Beta-D-fructose 6-phosphate is bound by residues K175, R196, and Y200. A fructose-2,6-bisphosphatase region spans residues 251–471; it reads PRSIYLCRHG…EALDTVPAHY (221 aa). Position 258 (R258) interacts with beta-D-fructose 2,6-bisphosphate. H259 acts as the Tele-phosphohistidine intermediate in catalysis. The beta-D-fructose 2,6-bisphosphate site is built by N265, G271, and R308. The active-site Proton donor/acceptor is the E328. Y339, R353, K357, Y368, Q394, and R398 together coordinate beta-D-fructose 2,6-bisphosphate. 350–353 serves as a coordination point for ATP; it reads FALR. ATP contacts are provided by residues 394 to 398 and Y430; that span reads QAVMR.

The protein in the C-terminal section; belongs to the phosphoglycerate mutase family. In terms of assembly, homodimer. Liver.

It carries out the reaction beta-D-fructose 2,6-bisphosphate + H2O = beta-D-fructose 6-phosphate + phosphate. The catalysed reaction is beta-D-fructose 6-phosphate + ATP = beta-D-fructose 2,6-bisphosphate + ADP + H(+). Its activity is regulated as follows. Phosphorylation at Ser-33 inhibits the kinase and activates the bisphosphatase. Functionally, synthesis and degradation of fructose 2,6-bisphosphate. The polypeptide is 6-phosphofructo-2-kinase/fructose-2,6-bisphosphatase 1 (Homo sapiens (Human)).